The following is a 199-amino-acid chain: ATP synthase subunit a (199 aa).

5 consecutive transmembrane segments (helical) span residues 2–22 (NQVYFLDIFMFVFVLQFLFYF), 53–73 (VISVFTFIILLTCCFGGYFTY), 80–100 (MVEFTFVYAAVAWLSTLLTFI), 141–161 (LTVNIMVGHLISMMLYQGLEL), and 169–189 (WLSIFAIMMECFVFFIQSYIF).

It belongs to the ATPase A chain family. In terms of assembly, F-type ATPases have 2 components, CF(1) - the catalytic core - and CF(0) - the membrane proton channel. CF(1) has five subunits: alpha(3), beta(3), gamma(1), delta(1), epsilon(1). CF(0) has three main subunits: a, b and c.

The protein localises to the mitochondrion inner membrane. Mitochondrial membrane ATP synthase (F(1)F(0) ATP synthase or Complex V) produces ATP from ADP in the presence of a proton gradient across the membrane which is generated by electron transport complexes of the respiratory chain. F-type ATPases consist of two structural domains, F(1) - containing the extramembraneous catalytic core and F(0) - containing the membrane proton channel, linked together by a central stalk and a peripheral stalk. During catalysis, ATP synthesis in the catalytic domain of F(1) is coupled via a rotary mechanism of the central stalk subunits to proton translocation. Key component of the proton channel; it may play a direct role in the translocation of protons across the membrane. This chain is ATP synthase subunit a (atp6), found in Caenorhabditis briggsae.